A 446-amino-acid polypeptide reads, in one-letter code: SPARC-related modular calcium-binding protein 2 (446 aa).

An N-terminal signal peptide occupies residues 1-21; that stretch reads MLLPQLCWLPLLAGLLPPVPA. Positions 34-86 constitute a Kazal-like domain; it reads QDKDKDCSLDCAGSPQKPLCASDGRTFLSRCEFQRAKCKDPQLEIAYRGNCKD. Disulfide bonds link cysteine 40–cysteine 71, cysteine 44–cysteine 64, cysteine 53–cysteine 84, cysteine 90–cysteine 113, cysteine 124–cysteine 131, and cysteine 133–cysteine 153. A Thyroglobulin type-1 1 domain is found at 87–153; the sequence is VSRCVAERKY…TAVAHKTPRC (67 aa). The tract at residues 147-228 is disordered; it reads AHKTPRCPGS…EHQSALEEAK (82 aa). Residues 161–172 show a composition bias toward basic and acidic residues; sequence LPQREGTGKTDD. N-linked (GlcNAc...) asparagine glycosylation occurs at asparagine 206. Polar residues predominate over residues 206-216; the sequence is NKTNKNSVSSC. One can recognise a Thyroglobulin type-1 2 domain in the interval 213–281; that stretch reads VSSCDQEHQS…TSTRYEQPKC (69 aa). 3 cysteine pairs are disulfide-bonded: cysteine 216/cysteine 240, cysteine 251/cysteine 258, and cysteine 260/cysteine 281. Positions 217–228 are enriched in basic and acidic residues; the sequence is DQEHQSALEEAK. 2 EF-hand domains span residues 347–382 and 384–419; these read LEER…LRKK and KPKK…AKED. The Ca(2+) site is built by aspartate 360, asparagine 362, serine 364, aspartate 366, glutamate 371, aspartate 397, asparagine 399, aspartate 401, serine 403, and glutamate 408. Asparagine 362 is a glycosylation site (N-linked (GlcNAc...) asparagine). Residues 416 to 446 form a disordered region; the sequence is AKEDGKADTKKRHTPRGHAESTSNRQPRKQG.

Binds various proteins from the extracellular matrix.

The protein resides in the secreted. It localises to the extracellular space. Its subcellular location is the extracellular matrix. It is found in the basement membrane. Its function is as follows. Promotes matrix assembly and cell adhesiveness. Can stimulate endothelial cell proliferation, migration, as well as angiogenesis. This chain is SPARC-related modular calcium-binding protein 2 (SMOC2), found in Homo sapiens (Human).